The sequence spans 403 residues: Sex hormone-binding globulin (403 aa).

Residues 1–30 form the signal peptide; that stretch reads MEKGEVASLRCRLLLLLLLLTLPPTHQGRT. 2 consecutive Laminin G-like domains span residues 46–218 and 225–391; these read KYLS…LGNC and GLFF…THSC. Cysteines 194 and 218 form a disulfide. The N-linked (GlcNAc...) asparagine glycan is linked to Asn274. Cys363 and Cys391 are oxidised to a cystine. Residue Asn397 is glycosylated (N-linked (GlcNAc...) asparagine).

In terms of assembly, homodimer. As to expression, isoform 2 is only expressed in the liver.

The protein localises to the secreted. Its function is as follows. Functions as an androgen transport protein, but may also be involved in receptor mediated processes. Each dimer binds one molecule of steroid. Specific for 5-alpha-dihydrotestosterone, testosterone, and 17-beta-estradiol. Regulates the plasma metabolic clearance rate of steroid hormones by controlling their plasma concentration. This is Sex hormone-binding globulin (Shbg) from Rattus norvegicus (Rat).